The sequence spans 25 residues: Caerin-1.5 (25 aa).

Leucine 25 carries the post-translational modification Leucine amide.

As to expression, expressed by the skin parotoid and/or rostral glands.

Its subcellular location is the secreted. Antibacterial peptide, that adopts an alpha helical conformation which can disrupt bacterial membranes. Each caerin displays a different antimicrobial specificity. In Ranoidea caerulea (Green tree frog), this protein is Caerin-1.5.